The following is a 129-amino-acid chain: Glycine cleavage system H protein (129 aa).

The Lipoyl-binding domain occupies Leu24–Lys106. Position 65 is an N6-lipoyllysine (Lys65).

Belongs to the GcvH family. The glycine cleavage system is composed of four proteins: P, T, L and H. It depends on (R)-lipoate as a cofactor.

In terms of biological role, the glycine cleavage system catalyzes the degradation of glycine. The H protein shuttles the methylamine group of glycine from the P protein to the T protein. The chain is Glycine cleavage system H protein from Prochlorococcus marinus (strain MIT 9215).